A 219-amino-acid polypeptide reads, in one-letter code: Thiamine-phosphate synthase (219 aa).

4-amino-2-methyl-5-(diphosphooxymethyl)pyrimidine is bound by residues 44-48 and asparagine 79; that span reads QFREK. Aspartate 80 and aspartate 99 together coordinate Mg(2+). Position 117 (serine 117) interacts with 4-amino-2-methyl-5-(diphosphooxymethyl)pyrimidine. Position 143–145 (143–145) interacts with 2-[(2R,5Z)-2-carboxy-4-methylthiazol-5(2H)-ylidene]ethyl phosphate; that stretch reads TST. Lysine 146 contributes to the 4-amino-2-methyl-5-(diphosphooxymethyl)pyrimidine binding site. 2-[(2R,5Z)-2-carboxy-4-methylthiazol-5(2H)-ylidene]ethyl phosphate contacts are provided by residues glycine 175 and 195-196; that span reads IS.

It belongs to the thiamine-phosphate synthase family. Mg(2+) is required as a cofactor.

The enzyme catalyses 2-[(2R,5Z)-2-carboxy-4-methylthiazol-5(2H)-ylidene]ethyl phosphate + 4-amino-2-methyl-5-(diphosphooxymethyl)pyrimidine + 2 H(+) = thiamine phosphate + CO2 + diphosphate. The catalysed reaction is 2-(2-carboxy-4-methylthiazol-5-yl)ethyl phosphate + 4-amino-2-methyl-5-(diphosphooxymethyl)pyrimidine + 2 H(+) = thiamine phosphate + CO2 + diphosphate. It catalyses the reaction 4-methyl-5-(2-phosphooxyethyl)-thiazole + 4-amino-2-methyl-5-(diphosphooxymethyl)pyrimidine + H(+) = thiamine phosphate + diphosphate. Its pathway is cofactor biosynthesis; thiamine diphosphate biosynthesis; thiamine phosphate from 4-amino-2-methyl-5-diphosphomethylpyrimidine and 4-methyl-5-(2-phosphoethyl)-thiazole: step 1/1. Functionally, condenses 4-methyl-5-(beta-hydroxyethyl)thiazole monophosphate (THZ-P) and 2-methyl-4-amino-5-hydroxymethyl pyrimidine pyrophosphate (HMP-PP) to form thiamine monophosphate (TMP). This Bacillus cereus (strain B4264) protein is Thiamine-phosphate synthase.